The primary structure comprises 163 residues: Nucleotide-binding protein AM1_1863 (163 aa).

Belongs to the YajQ family.

Functionally, nucleotide-binding protein. The protein is Nucleotide-binding protein AM1_1863 of Acaryochloris marina (strain MBIC 11017).